Here is an 81-residue protein sequence, read N- to C-terminus: Acyl carrier protein (81 aa).

A Carrier domain is found at 4–79 (SEILEKVKAI…DVLDFINNKV (76 aa)). At S39 the chain carries O-(pantetheine 4'-phosphoryl)serine.

It belongs to the acyl carrier protein (ACP) family. In terms of processing, 4'-phosphopantetheine is transferred from CoA to a specific serine of apo-ACP by AcpS. This modification is essential for activity because fatty acids are bound in thioester linkage to the sulfhydryl of the prosthetic group.

The protein resides in the cytoplasm. Its pathway is lipid metabolism; fatty acid biosynthesis. Carrier of the growing fatty acid chain in fatty acid biosynthesis. This is Acyl carrier protein from Thermosynechococcus vestitus (strain NIES-2133 / IAM M-273 / BP-1).